Consider the following 240-residue polypeptide: Probable transcriptional regulatory protein jhp_0149 (240 aa).

The protein belongs to the TACO1 family.

The protein localises to the cytoplasm. This Helicobacter pylori (strain J99 / ATCC 700824) (Campylobacter pylori J99) protein is Probable transcriptional regulatory protein jhp_0149.